The chain runs to 107 residues: Large ribosomal subunit protein uL24 (107 aa).

Belongs to the universal ribosomal protein uL24 family. In terms of assembly, part of the 50S ribosomal subunit.

Functionally, one of two assembly initiator proteins, it binds directly to the 5'-end of the 23S rRNA, where it nucleates assembly of the 50S subunit. In terms of biological role, one of the proteins that surrounds the polypeptide exit tunnel on the outside of the subunit. The polypeptide is Large ribosomal subunit protein uL24 (Mesomycoplasma hyopneumoniae (strain J / ATCC 25934 / NCTC 10110) (Mycoplasma hyopneumoniae)).